The chain runs to 488 residues: Inosine-5'-monophosphate dehydrogenase (488 aa).

CBS domains follow at residues 95 to 153 (VISN…SIKI) and 157 to 216 (MTKD…AKDE). Residues D250 and 300–302 (GIG) contribute to the NAD(+) site. Residues G302 and G304 each coordinate K(+). An IMP-binding site is contributed by S305. A K(+)-binding site is contributed by C307. C307 (thioimidate intermediate) is an active-site residue. Residues 340–342 (DGG), 363–364 (GS), and 387–391 (YRGMG) contribute to the IMP site. Residue R403 is the Proton acceptor of the active site. Residue E417 coordinates IMP. The disordered stretch occupies residues 467 to 488 (AGLAESHPHNVQITKESPNYSF). Residues E471, S472, and H473 each contribute to the K(+) site. Over residues 475–488 (HNVQITKESPNYSF) the composition is skewed to polar residues.

This sequence belongs to the IMPDH/GMPR family. In terms of assembly, homotetramer. It depends on K(+) as a cofactor.

The catalysed reaction is IMP + NAD(+) + H2O = XMP + NADH + H(+). It participates in purine metabolism; XMP biosynthesis via de novo pathway; XMP from IMP: step 1/1. Its activity is regulated as follows. Mycophenolic acid (MPA) is a non-competitive inhibitor that prevents formation of the closed enzyme conformation by binding to the same site as the amobile flap. In contrast, mizoribine monophosphate (MZP) is a competitive inhibitor that induces the closed conformation. MPA is a potent inhibitor of mammalian IMPDHs but a poor inhibitor of the bacterial enzymes. MZP is a more potent inhibitor of bacterial IMPDH. Functionally, catalyzes the conversion of inosine 5'-phosphate (IMP) to xanthosine 5'-phosphate (XMP), the first committed and rate-limiting step in the de novo synthesis of guanine nucleotides, and therefore plays an important role in the regulation of cell growth. The polypeptide is Inosine-5'-monophosphate dehydrogenase (Staphylococcus epidermidis (strain ATCC 35984 / DSM 28319 / BCRC 17069 / CCUG 31568 / BM 3577 / RP62A)).